The chain runs to 478 residues: Solute carrier family 2, facilitated glucose transporter member 8 (478 aa).

The segment at 1-20 (MTPEDQEETQPLLRPPGGSA) is disordered. Residues 1-25 (MTPEDQEETQPLLRPPGGSAPRGRR) are Cytoplasmic-facing. Residues 11–20 (PLLRPPGGSA) are compositionally biased toward low complexity. Residues 12–13 (LL) carry the Dileucine internalization motif motif. The helical transmembrane segment at 26–46 (VFLAAFAAALGPLSFGFALGY) threads the bilayer. Residues 47-70 (SSPAIPSLRRAAPPAPHLDEDAAS) lie on the Extracellular side of the membrane. A helical membrane pass occupies residues 71–91 (WFGAIVTLGAAAGGVLGGWLL). The Cytoplasmic segment spans residues 92–97 (DRAGRK). Residues 98–118 (LSLVLCALPFVAGFAVITAAQ) traverse the membrane as a helical segment. Over 119 to 127 (NLWMLLGGR) the chain is Extracellular. The chain crosses the membrane as a helical span at residues 128–148 (LLTGLACGIASLVAPVYISEI). Residues 149-158 (AYPEVRGLLG) lie on the Cytoplasmic side of the membrane. Residues 159–179 (SCVQLMVVTGILLAYLAGWVL) form a helical membrane-spanning segment. A D-glucose-binding site is contributed by Gln162. Over 180 to 182 (EWR) the chain is Extracellular. Residues 183-203 (WLAVLGCVPPSFMLLLMCFMP) traverse the membrane as a helical segment. The Cytoplasmic portion of the chain corresponds to 204–257 (ETPRFLLSQHKHQEAMAAMQFLWGYAQGWEEPPLGAQHQDFHVAQLRRPGVYKP). A helical transmembrane segment spans residues 258–278 (FIIGISLMAFQQLSGVNAVMF). D-glucose contacts are provided by residues 268–269 (QQ) and Asn274. Residues 279–293 (YAETIFEEAKFKDSS) lie on the Extracellular side of the membrane. A helical membrane pass occupies residues 294–314 (LASVVVGVIQVLFTATAALIM). The Cytoplasmic segment spans residues 315-320 (DRAGRR). Residues 321–341 (LLLTLSGVVMVFSTSAFGTYF) form a helical membrane-spanning segment. At 342–368 (KLTEGGPSNSSHVDLPALVSMEAADTN) the chain is on the extracellular side. Asn350 carries an N-linked (GlcNAc...) asparagine glycan. A helical transmembrane segment spans residues 369-389 (VGLAWLAVGSMCLFIAGFAVG). Over 390 to 405 (WGPIPWLLMSEIFPLH) the chain is Cytoplasmic. D-glucose is bound at residue Trp395. Residues 406 to 426 (VKGVATGVCVLTNWFMAFLVT) form a helical membrane-spanning segment. The Extracellular portion of the chain corresponds to 427 to 439 (KEFSSLMEVLRPY). The helical transmembrane segment at 440 to 460 (GAFWLASAFCIFGVLFTLACV) threads the bilayer. The Cytoplasmic portion of the chain corresponds to 461 to 478 (PETKGKTLEQITAHFEGR).

This sequence belongs to the major facilitator superfamily. Sugar transporter (TC 2.A.1.1) family. Glucose transporter subfamily. In terms of assembly, interacts with AP2B1. As to expression, abundantly expressed in testis and more moderately in lung, kidney, spleen, intestine, skeletal muscle, liver and mammary gland.

The protein resides in the cell membrane. The protein localises to the cytoplasmic vesicle membrane. The enzyme catalyses D-glucose(out) = D-glucose(in). It carries out the reaction D-fructose(out) = D-fructose(in). The catalysed reaction is L-dehydroascorbate(out) = L-dehydroascorbate(in). It catalyses the reaction alpha,alpha-trehalose(in) = alpha,alpha-trehalose(out). Its activity is regulated as follows. Inhibited by cytochalasin B. Functionally, insulin-regulated facilitative hexose transporter that mediates the transport of glucose and fructose. Facilitates hepatic influx of dietary trehalose, which in turn inhibits glucose and fructose influx triggering a starvation signal and hepatic autophagy through activation of AMPK and ULK1. Also able to mediate the transport of dehydroascorbate. This is Solute carrier family 2, facilitated glucose transporter member 8 from Bos taurus (Bovine).